The following is a 166-amino-acid chain: NAD(P)H-quinone oxidoreductase subunit I, chloroplastic (166 aa).

4Fe-4S ferredoxin-type domains follow at residues 55-84 and 95-124; these read GRIH…VDWK and LNYS…MTEE. [4Fe-4S] cluster is bound by residues Cys-64, Cys-67, Cys-70, Cys-74, Cys-104, Cys-107, Cys-110, and Cys-114.

It belongs to the complex I 23 kDa subunit family. NDH is composed of at least 16 different subunits, 5 of which are encoded in the nucleus. It depends on [4Fe-4S] cluster as a cofactor.

It localises to the plastid. The protein resides in the chloroplast thylakoid membrane. The enzyme catalyses a plastoquinone + NADH + (n+1) H(+)(in) = a plastoquinol + NAD(+) + n H(+)(out). The catalysed reaction is a plastoquinone + NADPH + (n+1) H(+)(in) = a plastoquinol + NADP(+) + n H(+)(out). In terms of biological role, NDH shuttles electrons from NAD(P)H:plastoquinone, via FMN and iron-sulfur (Fe-S) centers, to quinones in the photosynthetic chain and possibly in a chloroplast respiratory chain. The immediate electron acceptor for the enzyme in this species is believed to be plastoquinone. Couples the redox reaction to proton translocation, and thus conserves the redox energy in a proton gradient. In Encelia californica (Bush sunflower), this protein is NAD(P)H-quinone oxidoreductase subunit I, chloroplastic.